The following is a 288-amino-acid chain: MSRVANNRDWADDEDLEDSNELPQSTTTTNKDGTQTIVTWRFNDDGKKVKTTRRIRFTKVKEIVNPRVAERKSWGKFGLSQKDAAGPASDTTSVGENIIFRPSTNWRKDAKEEVSDAGAMKNKLKDKQVKCRICSGEHFTAKCPFKGTMAPLGEEGAVDVAAGHADTPEGPGGLGAGKSSYVPPHLRNGGAAGGERMGGGKFERDDLATLRVTNVSEMAEEQELRDMFERFGRVTRVFLAKDRETGLAKGFAFISFQERSDAAKACEKMDGYGFKHLILRVEFAKKAT.

Residues 1-33 are disordered; it reads MSRVANNRDWADDEDLEDSNELPQSTTTTNKDG. A compositionally biased stretch (acidic residues) spans 11–20; that stretch reads ADDEDLEDSN. Positions 21 to 33 are enriched in polar residues; that stretch reads ELPQSTTTTNKDG. An RRM domain is found at 208 to 286; sequence ATLRVTNVSE…LILRVEFAKK (79 aa).

Belongs to the eIF-3 subunit G family. As to quaternary structure, component of the eukaryotic translation initiation factor 3 (eIF-3) complex.

The protein localises to the cytoplasm. RNA-binding component of the eukaryotic translation initiation factor 3 (eIF-3) complex, which is involved in protein synthesis of a specialized repertoire of mRNAs and, together with other initiation factors, stimulates binding of mRNA and methionyl-tRNAi to the 40S ribosome. The eIF-3 complex specifically targets and initiates translation of a subset of mRNAs involved in cell proliferation. This subunit can bind 18S rRNA. This chain is Eukaryotic translation initiation factor 3 subunit G (tif35), found in Sclerotinia sclerotiorum (strain ATCC 18683 / 1980 / Ss-1) (White mold).